The chain runs to 617 residues: Protein AsmA (617 aa).

The Cytoplasmic portion of the chain corresponds to 1–3 (MRR). The chain crosses the membrane as a helical span at residues 4–24 (FLTTLMILLVVLVAGLSALVL). At 25-617 (LVNPNDFRDY…KDVKKLLEKM (593 aa)) the chain is on the periplasmic side. Residues 302–319 (TANGENGAAQQGQSQSTL) show a composition bias toward polar residues. A disordered region spans residues 302 to 321 (TANGENGAAQQGQSQSTLPR).

It belongs to the AsmA family.

Its subcellular location is the cell inner membrane. In terms of biological role, could be involved in the assembly of outer membrane proteins. May indirectly influence the assembly of outer membrane proteins, potentially by altering outer membrane fluidity. Inhibits the assembly of mutant forms of outer membrane protein F (OmpF). The chain is Protein AsmA from Escherichia coli (strain K12).